Reading from the N-terminus, the 389-residue chain is Cytochrome b (389 aa).

4 helical membrane-spanning segments follow: residues 32 to 52 (FGSLLATVLGIQILSGIFLAM), 76 to 98 (WLIRYMHATGASFFFAFLYLHIA), 113 to 133 (TWTIGTAIFFLTILTAFLGYT), and 179 to 199 (FFSLHYLLPFIISALAIMHMI). 2 residues coordinate heme b: histidine 82 and histidine 96. Histidine 183 and histidine 197 together coordinate heme b. An a ubiquinone-binding site is contributed by histidine 202. Helical transmembrane passes span 225–245 (YLIKDLVTIFLFFIIFSIIIF), 289–309 (LFGVIAMFFAIFILFFLPLLD), 321–341 (IGKLLFWCFISNFILLMFIGA), and 348–368 (YVAIGTYATLFYFAYFVFFIP).

Belongs to the cytochrome b family. As to quaternary structure, fungal cytochrome b-c1 complex contains 10 subunits; 3 respiratory subunits, 2 core proteins and 5 low-molecular weight proteins. Cytochrome b-c1 complex is a homodimer. Heme b is required as a cofactor.

The protein localises to the mitochondrion inner membrane. In terms of biological role, component of the ubiquinol-cytochrome c reductase complex (complex III or cytochrome b-c1 complex) that is part of the mitochondrial respiratory chain. The b-c1 complex mediates electron transfer from ubiquinol to cytochrome c. Contributes to the generation of a proton gradient across the mitochondrial membrane that is then used for ATP synthesis. The polypeptide is Cytochrome b (cob) (Schizosaccharomyces japonicus (Fission yeast)).